Here is a 491-residue protein sequence, read N- to C-terminus: Ketol-acid reductoisomerase (NADP(+)) (491 aa).

Residues 15–208 enclose the KARI N-terminal Rossmann domain; it reads AQLGKCRFMG…GGHRAGVLES (194 aa). NADP(+) is bound by residues 45–48, Arg68, Arg76, Ser78, and 108–110; these read CGAQ and DKQ. His132 is a catalytic residue. Residue Gly158 coordinates NADP(+). KARI C-terminal knotted domains lie at 209–344 and 345–484; these read SFVA…TAPQ and YEGK…MTDM. Residues Asp217, Glu221, Glu389, and Glu393 each contribute to the Mg(2+) site. Position 414 (Ser414) interacts with substrate.

The protein belongs to the ketol-acid reductoisomerase family. Requires Mg(2+) as cofactor.

The enzyme catalyses (2R)-2,3-dihydroxy-3-methylbutanoate + NADP(+) = (2S)-2-acetolactate + NADPH + H(+). It catalyses the reaction (2R,3R)-2,3-dihydroxy-3-methylpentanoate + NADP(+) = (S)-2-ethyl-2-hydroxy-3-oxobutanoate + NADPH + H(+). It participates in amino-acid biosynthesis; L-isoleucine biosynthesis; L-isoleucine from 2-oxobutanoate: step 2/4. Its pathway is amino-acid biosynthesis; L-valine biosynthesis; L-valine from pyruvate: step 2/4. In terms of biological role, involved in the biosynthesis of branched-chain amino acids (BCAA). Catalyzes an alkyl-migration followed by a ketol-acid reduction of (S)-2-acetolactate (S2AL) to yield (R)-2,3-dihydroxy-isovalerate. In the isomerase reaction, S2AL is rearranged via a Mg-dependent methyl migration to produce 3-hydroxy-3-methyl-2-ketobutyrate (HMKB). In the reductase reaction, this 2-ketoacid undergoes a metal-dependent reduction by NADPH to yield (R)-2,3-dihydroxy-isovalerate. This chain is Ketol-acid reductoisomerase (NADP(+)), found in Escherichia coli O157:H7.